The sequence spans 421 residues: ATP-dependent RNA helicase eIF4A (421 aa).

A disordered region spans residues 1-26 (MSNDKGLEEIPEDQSTTPHKPTSNVG). Residues 13-26 (DQSTTPHKPTSNVG) are compositionally biased toward polar residues. The Q motif signature appears at 48-76 (DSFDAMELKPELLRGVYAYGFERPSAIQQ). Residues 79 to 249 (IKPIIKGSDV…TKFMRDPVRI (171 aa)) form the Helicase ATP-binding domain. 92–99 (AQSGTGKT) serves as a coordination point for ATP. The short motif at 197-200 (DEAD) is the DEAD box element. A Helicase C-terminal domain is found at 260-421 (GIKQFYIAVE…EMPMNVADLI (162 aa)).

The protein belongs to the DEAD box helicase family. eIF4A subfamily. In terms of assembly, component of the eIF4F complex, which composition varies with external and internal environmental conditions. It is composed of at least eIF4A, eIF4E and eIF4G.

It localises to the cytoplasm. The catalysed reaction is ATP + H2O = ADP + phosphate + H(+). Functionally, ATP-dependent RNA helicase which is a subunit of the eIF4F complex involved in cap recognition and is required for mRNA binding to ribosome. In the current model of translation initiation, eIF4A unwinds RNA secondary structures in the 5'-UTR of mRNAs which is necessary to allow efficient binding of the small ribosomal subunit, and subsequent scanning for the initiator codon. This Aspergillus oryzae (strain ATCC 42149 / RIB 40) (Yellow koji mold) protein is ATP-dependent RNA helicase eIF4A (tif1).